The chain runs to 334 residues: NAD-dependent protein deacylase sirtuin-6 (334 aa).

Serine 2 carries the post-translational modification N-acetylserine. Residue serine 10 is modified to Phosphoserine. Residues 27 to 272 form the Deacetylase sirtuin-type domain; that stretch reads PEELERKVWE…CRLMKHLGLE (246 aa). Lysine 33 bears the N6-acetyllysine mark. NAD(+) is bound by residues alanine 53, threonine 57, phenylalanine 64, arginine 65, tryptophan 71, glutamine 113, and histidine 133. The active-site Proton acceptor is the histidine 133. 3 residues coordinate Zn(2+): cysteine 141, cysteine 144, and cysteine 166. Lysine 170 is covalently cross-linked (Glycyl lysine isopeptide (Lys-Gly) (interchain with G-Cter in ubiquitin)). Residue cysteine 177 participates in Zn(2+) binding. Glycine 214, serine 216, asparagine 240, glutamine 242, and valine 258 together coordinate NAD(+). Positions 312–334 are disordered; the sequence is KSKPNSPILHRPPKRVKTEAAPS.

Belongs to the sirtuin family. Class IV subfamily. As to quaternary structure, homodimer; binds to nucleosomes and DNA ends as a homodimer. Interacts with RELA; interferes with RELA binding to target DNA. Interacts with SMARCA5; promoting recruitment of SMARCA5/SNF2H to double-strand breaks (DSBs) sites. Interacts with the mTORC2 complex; preventing the ability of SIRT6 to deacetylate FOXO1. Interacts with the CLOCK-BMAL1 complex; recruited by the CLOCK-BMAL1 complex to regulate expression of clock-controlled genes. Interacts with CSNK2A2; preventing CSNK2A2 localization to the nucleus. Zn(2+) serves as cofactor. Acetylated at Lys-33. Deacetylation at Lys-33 by SIRT1 promotes homomultimerization and binding to double-strand breaks (DSBs) sites. Post-translationally, phosphorylation at Ser-10 by MAPK8/JNK1 in response to oxidative stress stimulates the mono-ADP-ribosyltransferase activity on PARP1, leading to PARP1 recruitment to double-strand breaks (DSBs). In terms of processing, monoubiquitinated at Lys-170 by STUB1/CHIP, preventing its degradation by the proteasome. Sumoylated, leading to specifically decrease ability to deacetylate histone H3 at 'Lys-56' (H3K56ac). In terms of tissue distribution, highest levels are found in muscle, thymus, spleen, brain and heart (at protein level).

Its subcellular location is the nucleus. The protein localises to the chromosome. The protein resides in the telomere. It localises to the endoplasmic reticulum. It catalyses the reaction N(6)-acetyl-L-lysyl-[protein] + NAD(+) + H2O = 2''-O-acetyl-ADP-D-ribose + nicotinamide + L-lysyl-[protein]. It carries out the reaction N(6)-tetradecanoyl-L-lysyl-[protein] + NAD(+) + H2O = 2''-O-tetradecanoyl-ADP-D-ribose + nicotinamide + L-lysyl-[protein]. The enzyme catalyses N(6)-hexadecanoyl-L-lysyl-[protein] + NAD(+) + H2O = 2''-O-hexadecanoyl-ADP-D-ribose + nicotinamide + L-lysyl-[protein]. The catalysed reaction is L-lysyl-[protein] + NAD(+) = N(6)-(ADP-D-ribosyl)-L-lysyl-[protein] + nicotinamide + H(+). It catalyses the reaction L-arginyl-[protein] + NAD(+) = N(omega)-(ADP-D-ribosyl)-L-arginyl-[protein] + nicotinamide + H(+). Compared to the defatty-acylase activity, the protein deacetylase activity is weak in vitro, and requires activation. The histone deacetylase activity is strongly activated upon binding to nucleosomes and chromatin in vivo. Two molecules of SIRT6 associate with the acidic patch of one nucleosome, while the C-terminal disordered region of SIRT6 associates with nucleosomal DNA, leading to efficient histone deacetylation. The protein-lysine deacetylase activity is also activated by long-chain free fatty-acids. NAD-dependent protein deacetylase, deacylase and mono-ADP-ribosyltransferase that plays an essential role in DNA damage repair, telomere maintenance, metabolic homeostasis, inflammation, tumorigenesis and aging. Displays protein-lysine deacetylase or defatty-acylase (demyristoylase and depalmitoylase) activity, depending on the context. Acts as a key histone deacetylase by catalyzing deacetylation of histone H3 at 'Lys-9', 'Lys-18' and 'Lys-56' (H3K9ac, H3K18ac and H3K56ac, respectively), suppressing target gene expression of several transcription factors, including NF-kappa-B. Acts as an inhibitor of transcription elongation by mediating deacetylation of H3K9ac and H3K56ac, preventing release of NELFE from chromatin and causing transcriptional pausing. Involved in DNA repair by promoting double-strand break (DSB) repair: acts as a DSB sensor by recognizing and binding DSB sites, leading to (1) recruitment of DNA repair proteins, such as SMARCA5/SNF2H, and (2) deacetylation of histone H3K9ac and H3K56ac. SIRT6 participation to DSB repair is probably involved in extension of life span. Also promotes DNA repair by deacetylating non-histone proteins, such as DDB2 and p53/TP53. Specifically deacetylates H3K18ac at pericentric heterochromatin, thereby maintaining pericentric heterochromatin silencing at centromeres and protecting against genomic instability and cellular senescence. Involved in telomere maintenance by catalyzing deacetylation of histone H3 in telomeric chromatin, regulating telomere position effect and telomere movement in response to DNA damage. Required for embryonic stem cell differentiation by mediating histone deacetylation of H3K9ac. Plays a major role in metabolism by regulating processes such as glycolysis, gluconeogenesis, insulin secretion and lipid metabolism. Inhibits glycolysis via histone deacetylase activity and by acting as a corepressor of the transcription factor HIF1A, thereby controlling the expression of multiple glycolytic genes. Has tumor suppressor activity by repressing glycolysis, thereby inhibiting the Warburg effect. Also regulates glycolysis and tumorigenesis by mediating deacetylation and nuclear export of non-histone proteins, such as isoform M2 of PKM (PKM2). Acts as a negative regulator of gluconeogenesis by mediating deacetylation of non-histone proteins, such as FOXO1 and KAT2A/GCN5. Promotes beta-oxidation of fatty acids during fasting by catalyzing deacetylation of NCOA2, inducing coactivation of PPARA. Acts as a regulator of lipid catabolism in brown adipocytes, both by catalyzing deacetylation of histones and non-histone proteins, such as FOXO1. Also acts as a regulator of circadian rhythms, both by regulating expression of clock-controlled genes involved in lipid and carbohydrate metabolism, and by catalyzing deacetylation of PER2. The defatty-acylase activity is specifically involved in regulation of protein secretion. Has high activity toward long-chain fatty acyl groups and mediates protein-lysine demyristoylation and depalmitoylation of target proteins, such as RRAS2 and TNF, thereby regulating their secretion. Also acts as a mono-ADP-ribosyltransferase by mediating mono-ADP-ribosylation of PARP1, TRIM28/KAP1 or SMARCC2/BAF170. Mono-ADP-ribosyltransferase activity is involved in DNA repair, cellular senescence, repression of LINE-1 retrotransposon elements and regulation of transcription. This chain is NAD-dependent protein deacylase sirtuin-6, found in Mus musculus (Mouse).